The chain runs to 179 residues: Large ribosomal subunit protein uL5 (179 aa).

This sequence belongs to the universal ribosomal protein uL5 family. As to quaternary structure, part of the 50S ribosomal subunit; part of the 5S rRNA/L5/L18/L25 subcomplex. Contacts the 5S rRNA and the P site tRNA. Forms a bridge to the 30S subunit in the 70S ribosome.

This is one of the proteins that bind and probably mediate the attachment of the 5S RNA into the large ribosomal subunit, where it forms part of the central protuberance. In the 70S ribosome it contacts protein S13 of the 30S subunit (bridge B1b), connecting the 2 subunits; this bridge is implicated in subunit movement. Contacts the P site tRNA; the 5S rRNA and some of its associated proteins might help stabilize positioning of ribosome-bound tRNAs. The protein is Large ribosomal subunit protein uL5 of Marinobacter nauticus (strain ATCC 700491 / DSM 11845 / VT8) (Marinobacter aquaeolei).